Reading from the N-terminus, the 203-residue chain is CCG-binding protein 1 (203 aa).

The tract at residues 156-178 is disordered; sequence IPDGLPKSEQELEEEEKSKMPDS. Basic and acidic residues predominate over residues 161–175; it reads PKSEQELEEEEKSKM.

In terms of assembly, homotetramer. Interacts with MEE12/CCG, MED7A, MED7B, MED9, AGL49, AGL53, AGL75, AGL80, AGL81, AGL82, AGL103 and NRPB1 (via CTD). As to expression, expressed in roots, leaves, stems and flowers. Expressed in the central cell of mature ovules.

The protein localises to the nucleus. It localises to the cytoplasm. Its function is as follows. Required for the development of the one-cell zygote and endosperm in embryos. Required for micropylar pollen tube guidance, but has no effect on ovule development and gametophytic cell fate specification. May connect transcription factors and the Pol II machinery to regulate pollen tube attraction, via its interactions with AGAMOUS-like (AGL) transcription factors, MEE14/CCG and the Mediator complex. The protein is CCG-binding protein 1 of Arabidopsis thaliana (Mouse-ear cress).